Here is a 125-residue protein sequence, read N- to C-terminus: Cytochrome c oxidase assembly factor 6 homolog (125 aa).

Position 2 is an N-acetylalanine (glycine 2). One can recognise a CHCH domain in the interval 55-98; the sequence is RQVCWGARDEYWKCLDENLEDASQCKKLRSSFESSCPQQWIKYF. The Cx9C motif signature appears at 58–68; that stretch reads CWGARDEYWKC. 2 cysteine pairs are disulfide-bonded: cysteine 58–cysteine 90 and cysteine 68–cysteine 79. A Cx10C motif motif is present at residues 79 to 90; the sequence is CKKLRSSFESSC.

Belongs to the cytochrome c oxidase subunit 6B family. As to quaternary structure, interacts with COA1. Found in a complex with TMEM177, COX20, MT-CO2/COX2, COX18, SCO1 and SCO2. Interacts with MT-CO2/COX2 and SCO2. Interacts with SCO1. Interacts with COX20 in a MT-CO2/COX2- and COX18-dependent manner. Interacts with COX16.

The protein localises to the mitochondrion intermembrane space. Involved in the maturation of the mitochondrial respiratory chain complex IV subunit MT-CO2/COX2. Thereby, may regulate early steps of complex IV assembly. Mitochondrial respiratory chain complex IV or cytochrome c oxidase is the component of the respiratory chain that catalyzes the transfer of electrons from intermembrane space cytochrome c to molecular oxygen in the matrix and as a consequence contributes to the proton gradient involved in mitochondrial ATP synthesis. May also be required for efficient formation of respiratory supercomplexes comprised of complexes III and IV. This Homo sapiens (Human) protein is Cytochrome c oxidase assembly factor 6 homolog (COA6).